The chain runs to 476 residues: Amino acid permease 3 (476 aa).

The Cytoplasmic portion of the chain corresponds to 1–33; sequence MVQNHQTVLAVDMPQTGGSKYLDDDGKNKRTGS. Residues 34-54 form a helical membrane-spanning segment; that stretch reads VWTASAHIITAVIGSGVLSLA. The Extracellular segment spans residues 55–57; the sequence is WAT. Residues 58–78 traverse the membrane as a helical segment; that stretch reads AQLGWLAGPVVMLLFSAVTYF. The Cytoplasmic segment spans residues 79–122; that stretch reads TSSLLAACYRSGDPISGKRNYTYMDAVRSNLGGVKVTLCGIVQY. A helical membrane pass occupies residues 123–143; the sequence is LNIFGVAIGYTIASAISMMAI. The Extracellular segment spans residues 144–166; sequence KRSNCFHKSGGKDPCHMNSNPYM. 2 consecutive transmembrane segments (helical) span residues 167–187 and 188–208; these read IAFG…QLWW and LSIL…ALGI. Topologically, residues 209–277 are extracellular; the sequence is AQVVVNGKVK…EEKTMKKATL (69 aa). The chain crosses the membrane as a helical span at residues 278 to 298; the sequence is VSVSVTTMFYMLCGCMGYAAF. At 299–300 the chain is on the cytoplasmic side; the sequence is GD. The helical transmembrane segment at 301–321 threads the bilayer; that stretch reads LSPGNLLTGFGFYNPYWLLDI. Residues 322 to 324 lie on the Extracellular side of the membrane; the sequence is ANA. The chain crosses the membrane as a helical span at residues 325 to 345; it reads AIVIHLIGAYQVYCQPLFAFI. Residues 346–384 are Cytoplasmic-facing; that stretch reads EKQASIQFPDSEFIAKDIKIPIPGFKPLRLNVFRLIWRT. 2 helical membrane-spanning segments follow: residues 385–405 and 406–426; these read VFVI…DVVG and LLGA…MYIA. Over 427–441 the chain is Cytoplasmic; sequence QKKIPRWSTRWVCLQ. The helical transmembrane segment at 442–462 threads the bilayer; it reads VFSLGCLVVSIAAAAGSIAGV. At 463-476 the chain is on the extracellular side; that stretch reads LLDLKSYKPFRSEY.

This sequence belongs to the amino acid/polyamine transporter 2 family. Amino acid/auxin permease (AAAP) (TC 2.A.18.2) subfamily. In terms of tissue distribution, expressed in the root phloem. Detected in stamens, in cotyledons, and in major veins of mature leaves.

It is found in the cell membrane. Its subcellular location is the nucleus membrane. The protein resides in the endomembrane system. With respect to regulation, inhibited by carbonylcyanide m-chlorophenylhydrazone and 2,4-dinitrophenol. Functionally, amino acid-proton symporter. Stereospecific transporter with a broad specificity for GABA, tryptophan and both neutral and basic amino acids. High affinity transport of cationic amino acids. This chain is Amino acid permease 3 (AAP3), found in Arabidopsis thaliana (Mouse-ear cress).